The following is a 289-amino-acid chain: Oxaloacetate decarboxylase (289 aa).

Substrate is bound at residue S50. D88 serves as a coordination point for Mg(2+). Residues R159 and H235 each contribute to the substrate site.

The protein belongs to the isocitrate lyase family. Oxaloacetate decarboxylase subfamily. Homotetramer; dimer of dimers. Requires Mg(2+) as cofactor.

It carries out the reaction oxaloacetate + H(+) = pyruvate + CO2. In terms of biological role, catalyzes the decarboxylation of oxaloacetate into pyruvate. Seems to play a role in maintaining cellular concentrations of bicarbonate and pyruvate. This chain is Oxaloacetate decarboxylase, found in Pseudomonas fluorescens (strain SBW25).